Here is a 195-residue protein sequence, read N- to C-terminus: Insertion element IS136 uncharacterized protein Atu4601 (195 aa).

Residues 25–194 (MVMRSNLRWC…SPRQFIRAKS (170 aa)) form the Integrase catalytic domain.

The chain is Insertion element IS136 uncharacterized protein Atu4601 from Agrobacterium fabrum (strain C58 / ATCC 33970) (Agrobacterium tumefaciens (strain C58)).